The following is a 38-amino-acid chain: Defensin D7 (38 aa).

This sequence belongs to the DEFL family. Group IV subfamily. In terms of tissue distribution, distributed in the epidermal cell layer of leaves and in the subepidermal layer region of stems. Not in roots.

It localises to the secreted. The protein localises to the cell wall. Antimicrobial peptide. Active against Fusarium spp., Gram-positive and Gram-negative bacterial pathogens. The sequence is that of Defensin D7 from Spinacia oleracea (Spinach).